A 277-amino-acid polypeptide reads, in one-letter code: 4-hydroxy-3-methylbut-2-enyl diphosphate reductase (277 aa).

C12 is a binding site for [4Fe-4S] cluster. Positions 36 and 70 each coordinate (2E)-4-hydroxy-3-methylbut-2-enyl diphosphate. The dimethylallyl diphosphate site is built by H36 and H70. Residues H36 and H70 each coordinate isopentenyl diphosphate. C92 is a [4Fe-4S] cluster binding site. Position 120 (H120) interacts with (2E)-4-hydroxy-3-methylbut-2-enyl diphosphate. H120 contacts dimethylallyl diphosphate. H120 serves as a coordination point for isopentenyl diphosphate. Catalysis depends on E122, which acts as the Proton donor. T158 contacts (2E)-4-hydroxy-3-methylbut-2-enyl diphosphate. C186 serves as a coordination point for [4Fe-4S] cluster. Residues S214, N216, and S258 each contribute to the (2E)-4-hydroxy-3-methylbut-2-enyl diphosphate site. S214, N216, and S258 together coordinate dimethylallyl diphosphate. S214, N216, and S258 together coordinate isopentenyl diphosphate.

This sequence belongs to the IspH family. [4Fe-4S] cluster is required as a cofactor.

The catalysed reaction is isopentenyl diphosphate + 2 oxidized [2Fe-2S]-[ferredoxin] + H2O = (2E)-4-hydroxy-3-methylbut-2-enyl diphosphate + 2 reduced [2Fe-2S]-[ferredoxin] + 2 H(+). It carries out the reaction dimethylallyl diphosphate + 2 oxidized [2Fe-2S]-[ferredoxin] + H2O = (2E)-4-hydroxy-3-methylbut-2-enyl diphosphate + 2 reduced [2Fe-2S]-[ferredoxin] + 2 H(+). It participates in isoprenoid biosynthesis; dimethylallyl diphosphate biosynthesis; dimethylallyl diphosphate from (2E)-4-hydroxy-3-methylbutenyl diphosphate: step 1/1. It functions in the pathway isoprenoid biosynthesis; isopentenyl diphosphate biosynthesis via DXP pathway; isopentenyl diphosphate from 1-deoxy-D-xylulose 5-phosphate: step 6/6. Catalyzes the conversion of 1-hydroxy-2-methyl-2-(E)-butenyl 4-diphosphate (HMBPP) into a mixture of isopentenyl diphosphate (IPP) and dimethylallyl diphosphate (DMAPP). Acts in the terminal step of the DOXP/MEP pathway for isoprenoid precursor biosynthesis. This Campylobacter jejuni subsp. jejuni serotype O:2 (strain ATCC 700819 / NCTC 11168) protein is 4-hydroxy-3-methylbut-2-enyl diphosphate reductase.